A 320-amino-acid chain; its full sequence is ATP-dependent 6-phosphofructokinase isozyme 1 (320 aa).

Residue Gly12 coordinates ATP. ADP is bound by residues 22 to 26 and 55 to 60; these read RGVVR and RYSVSD. ATP is bound by residues 73-74 and 103-106; these read RF and GDGS. Asp104 lines the Mg(2+) pocket. 126–128 is a binding site for substrate; sequence TID. Asp128 acts as the Proton acceptor in catalysis. Arg155 serves as a coordination point for ADP. Residues Arg163 and 170-172 contribute to the substrate site; that span reads MGR. Residues 186–188, Lys212, and 214–216 each bind ADP; these read GCE and KKH. Substrate-binding positions include Glu223, Arg244, and 250–253; that span reads HIQR.

This sequence belongs to the phosphofructokinase type A (PFKA) family. ATP-dependent PFK group I subfamily. Prokaryotic clade 'B1' sub-subfamily. As to quaternary structure, homotetramer. The cofactor is Mg(2+).

It is found in the cytoplasm. It carries out the reaction beta-D-fructose 6-phosphate + ATP = beta-D-fructose 1,6-bisphosphate + ADP + H(+). It participates in carbohydrate degradation; glycolysis; D-glyceraldehyde 3-phosphate and glycerone phosphate from D-glucose: step 3/4. Its activity is regulated as follows. Allosterically activated by ADP and other diphosphonucleosides, and allosterically inhibited by phosphoenolpyruvate. Its function is as follows. Catalyzes the phosphorylation of D-fructose 6-phosphate to fructose 1,6-bisphosphate by ATP, the first committing step of glycolysis. The polypeptide is ATP-dependent 6-phosphofructokinase isozyme 1 (Escherichia coli O6:H1 (strain CFT073 / ATCC 700928 / UPEC)).